The primary structure comprises 33 residues: Actin (33 aa).

This sequence belongs to the actin family.

The protein resides in the cytoplasm. The protein localises to the cytoskeleton. The enzyme catalyses ATP + H2O = ADP + phosphate + H(+). Actins are highly conserved proteins that are involved in various types of cell motility and are ubiquitously expressed in all eukaryotic cells. This chain is Actin, found in Dictyocaulus viviparus (Bovine lungworm).